Here is a 247-residue protein sequence, read N- to C-terminus: Carboxy-S-adenosyl-L-methionine synthase (247 aa).

Residues Y40, 65–67 (GAS), 90–91 (DN), 122–123 (DI), N137, and R204 each bind S-adenosyl-L-methionine.

This sequence belongs to the class I-like SAM-binding methyltransferase superfamily. Cx-SAM synthase family. In terms of assembly, homodimer.

It catalyses the reaction prephenate + S-adenosyl-L-methionine = carboxy-S-adenosyl-L-methionine + 3-phenylpyruvate + H2O. In terms of biological role, catalyzes the conversion of S-adenosyl-L-methionine (SAM) to carboxy-S-adenosyl-L-methionine (Cx-SAM). This is Carboxy-S-adenosyl-L-methionine synthase from Pseudomonas entomophila (strain L48).